The following is a 645-amino-acid chain: 1,4-alpha-glucan branching enzyme GlgB (645 aa).

Asp-309 acts as the Nucleophile in catalysis. Glu-352 acts as the Proton donor in catalysis. The tract at residues 619–645 (VKTRKGSKKQDGSKTKVRSNVTSRGKR) is disordered. The segment covering 636-645 (RSNVTSRGKR) has biased composition (polar residues).

This sequence belongs to the glycosyl hydrolase 13 family. GlgB subfamily. Monomer.

The catalysed reaction is Transfers a segment of a (1-&gt;4)-alpha-D-glucan chain to a primary hydroxy group in a similar glucan chain.. The protein operates within glycan biosynthesis; glycogen biosynthesis. Its function is as follows. Catalyzes the formation of the alpha-1,6-glucosidic linkages in glycogen by scission of a 1,4-alpha-linked oligosaccharide from growing alpha-1,4-glucan chains and the subsequent attachment of the oligosaccharide to the alpha-1,6 position. The polypeptide is 1,4-alpha-glucan branching enzyme GlgB (Bacillus mycoides (strain KBAB4) (Bacillus weihenstephanensis)).